A 359-amino-acid chain; its full sequence is Cyclin puc1 (359 aa).

Belongs to the cyclin family.

Function in exit from the mitotic cycle. Contributes to negative regulation of the timing of sexual development in fission yeast, and functions at the transition between cycling and non-cycling cells. Interacts with protein kinase A. This is Cyclin puc1 (puc1) from Schizosaccharomyces pombe (strain 972 / ATCC 24843) (Fission yeast).